Here is a 106-residue protein sequence, read N- to C-terminus: Movement protein TGB2 (106 aa).

Topologically, residues 1 to 8 are cytoplasmic; that stretch reads MPLTPPPD. A helical transmembrane segment spans residues 9–29; sequence YTRVYTALAIGASIAFFTGLI. The Lumenal portion of the chain corresponds to 30 to 73; it reads TRNTLPSVGDLQHNLPHGGRYRDGTKSVEYCGPRKLNSVESGSR. Residues 74-94 form a helical membrane-spanning segment; it reads WTFQPWLLVIVLVALIIALGR. The Cytoplasmic segment spans residues 95 to 106; that stretch reads QGHNCRACGRSH.

It belongs to the Tymovirales TGBp2 protein family.

It is found in the host endoplasmic reticulum membrane. Functionally, plays a role in viral cell-to-cell propagation, by facilitating genome transport to neighboring plant cells through plasmosdesmata,. The polypeptide is Movement protein TGB2 (Lilium (LSV)).